A 147-amino-acid chain; its full sequence is Large ribosomal subunit protein uL15 (147 aa).

Residues 1–62 (MDLNTLKPAL…GQMPLQRRLP (62 aa)) are disordered. Positions 30-39 (TATKGHKGQK) are enriched in basic residues.

This sequence belongs to the universal ribosomal protein uL15 family. Part of the 50S ribosomal subunit.

In terms of biological role, binds to the 23S rRNA. The chain is Large ribosomal subunit protein uL15 from Pelobacter propionicus (strain DSM 2379 / NBRC 103807 / OttBd1).